The primary structure comprises 209 residues: Orotate phosphoribosyltransferase (209 aa).

5-phospho-alpha-D-ribose 1-diphosphate contacts are provided by residues arginine 96, lysine 100, histidine 102, and 122 to 130 (EDLISTGGS). Residue serine 126 participates in orotate binding.

This sequence belongs to the purine/pyrimidine phosphoribosyltransferase family. PyrE subfamily. As to quaternary structure, homodimer. Mg(2+) serves as cofactor.

It carries out the reaction orotidine 5'-phosphate + diphosphate = orotate + 5-phospho-alpha-D-ribose 1-diphosphate. It participates in pyrimidine metabolism; UMP biosynthesis via de novo pathway; UMP from orotate: step 1/2. Functionally, catalyzes the transfer of a ribosyl phosphate group from 5-phosphoribose 1-diphosphate to orotate, leading to the formation of orotidine monophosphate (OMP). The protein is Orotate phosphoribosyltransferase of Streptococcus pyogenes serotype M1.